Consider the following 222-residue polypeptide: Eukaryotic translation initiation factor 3 subunit K (222 aa).

Residues 46 to 208 form the PCI domain; that stretch reads YDLEANLAVL…KIKTKNITEK (163 aa).

It belongs to the eIF-3 subunit K family. As to quaternary structure, component of the eukaryotic translation initiation factor 3 (eIF-3) complex. The eIF-3 complex interacts with pix.

The protein resides in the cytoplasm. Its function is as follows. Component of the eukaryotic translation initiation factor 3 (eIF-3) complex, which is involved in protein synthesis of a specialized repertoire of mRNAs and, together with other initiation factors, stimulates binding of mRNA and methionyl-tRNAi to the 40S ribosome. The eIF-3 complex specifically targets and initiates translation of a subset of mRNAs involved in cell proliferation. The sequence is that of Eukaryotic translation initiation factor 3 subunit K from Drosophila persimilis (Fruit fly).